Consider the following 334-residue polypeptide: Desumoylating isopeptidase 1 homolog (334 aa).

The 145-residue stretch at 30–174 (TVVRLNVYDM…FLEKCIPQEW (145 aa)) folds into the PPPDE domain. Active-site residues include His-55 and Cys-133. The span at 310–325 (SNIGKTNSTPGTTSNG) shows a compositional bias: polar residues. The interval 310–334 (SNIGKTNSTPGTTSNGLAKPTCSEC) is disordered.

This sequence belongs to the DeSI family. In terms of tissue distribution, expressed in the pharynx, hypodermis, intestine, head neuron and tail neuron.

Its subcellular location is the cytoplasm. It is found in the nucleus. Functionally, protease which deconjugates SUMO from some substrate proteins. Has isopeptidase but not SUMO-processing activity. Collaborates with ubql-1 in the export of ubiquitinated proteins from the nucleus to the cytoplasm. In Caenorhabditis elegans, this protein is Desumoylating isopeptidase 1 homolog.